Reading from the N-terminus, the 456-residue chain is Phosphomethylpyrimidine synthase (456 aa).

Residues asparagine 80, methionine 109, tyrosine 139, histidine 175, 195-197 (SRG), 236-239 (DSLR), and glutamate 275 each bind substrate. Histidine 279 lines the Zn(2+) pocket. Tyrosine 302 lines the substrate pocket. Position 343 (histidine 343) interacts with Zn(2+). Residues cysteine 423, cysteine 426, and cysteine 431 each coordinate [4Fe-4S] cluster.

The protein belongs to the ThiC family. [4Fe-4S] cluster is required as a cofactor.

The catalysed reaction is 5-amino-1-(5-phospho-beta-D-ribosyl)imidazole + S-adenosyl-L-methionine = 4-amino-2-methyl-5-(phosphooxymethyl)pyrimidine + CO + 5'-deoxyadenosine + formate + L-methionine + 3 H(+). It functions in the pathway cofactor biosynthesis; thiamine diphosphate biosynthesis. Functionally, catalyzes the synthesis of the hydroxymethylpyrimidine phosphate (HMP-P) moiety of thiamine from aminoimidazole ribotide (AIR) in a radical S-adenosyl-L-methionine (SAM)-dependent reaction. The sequence is that of Phosphomethylpyrimidine synthase from Prochlorococcus marinus (strain MIT 9515).